We begin with the raw amino-acid sequence, 499 residues long: MNFRNKYVLAIDQGTTSSRAILFNHQGTIITLAQKPFQQYFPKPGWVEHDPNEIWYTQSSVIKEAMAKADVTDSHIACIGIANQRETTIIWDRETGFPVYNAIVWQDRRTADYCEELKSQGWAERILQKTGLVIDAYFSATKIKWILDNVKGIRERAERGELCFGTVDTWLVWKLTRGAQFITDVTNASRTMLFNIRTLQWDQELLDLFTIPASMLPQVKACSEVYCETSTPIFKKGIPVSGMAGDQQAALFGQLCVEDGMIKTTYGTGCFMILNTGKEPVLSQNNLLTTIAWKLGDQTTYALEGSVFVGGAVVQWLRDGIGLIPNASITEQMAKSVSDNGGVYFVPALTGLGAPYWDQYARGAIIGITRGTTAAHLTRAALEGICYQVYDVLMAMENDIHAKPKEIRVDGGAIANNFLMQFQSDICRCPVVRPNVLETTALGAAYLAGLAIGYWKDIDELKEQWCLDKVFNPQMKEDTARKLLNEWHKAVGRSQNWAE.

Threonine 15 contributes to the ADP binding site. Residues threonine 15, threonine 16, and serine 17 each coordinate ATP. Threonine 15 is a sn-glycerol 3-phosphate binding site. ADP is bound at residue arginine 19. Residues arginine 85, glutamate 86, tyrosine 137, and aspartate 246 each contribute to the sn-glycerol 3-phosphate site. Residues arginine 85, glutamate 86, tyrosine 137, aspartate 246, and glutamine 247 each contribute to the glycerol site. 2 residues coordinate ADP: threonine 268 and glycine 311. Threonine 268, glycine 311, glutamine 315, and glycine 412 together coordinate ATP. ADP contacts are provided by glycine 412 and asparagine 416.

Belongs to the FGGY kinase family.

It carries out the reaction glycerol + ATP = sn-glycerol 3-phosphate + ADP + H(+). It participates in polyol metabolism; glycerol degradation via glycerol kinase pathway; sn-glycerol 3-phosphate from glycerol: step 1/1. Its activity is regulated as follows. Inhibited by fructose 1,6-bisphosphate (FBP). Key enzyme in the regulation of glycerol uptake and metabolism. Catalyzes the phosphorylation of glycerol to yield sn-glycerol 3-phosphate. The protein is Glycerol kinase of Parabacteroides distasonis (strain ATCC 8503 / DSM 20701 / CIP 104284 / JCM 5825 / NCTC 11152).